We begin with the raw amino-acid sequence, 646 residues long: Amyloid beta A4 precursor protein-binding family B member 1-interacting protein (646 aa).

The segment at 82–141 (FATERDTSKGSVPVAPAPSKPQSNFSLPASFDSSKPATSSNSIAAPPPPPAFKPSKEEEE) is disordered. Residues 101–116 (KPQSNFSLPASFDSSK) are compositionally biased toward polar residues. Residues 162–248 (KKLVVKVEIT…NKVLFQEKKH (87 aa)) form the Ras-associating domain. The PH domain maps to 292-401 (VPDLEGVLYL…WVTGIRVAKY (110 aa)). A disordered region spans residues 420 to 646 (ASWANRTIQA…NAMQKKRTQP (227 aa)). The span at 429-445 (ASSTASTPSPTPKAKAA) shows a compositional bias: low complexity. Composition is skewed to pro residues over residues 465–500 (LPPPPPSMDFLPPPPPDPMFPPPPPAPPAPPAPPVP), 509–536 (FPPPPKFPQSSFPPPPMDDLPPPPPPPE), 560–577 (LPPPPPDPVASLPPPPPA), and 584–598 (APPPPPPPPPPPAPA).

Belongs to the MRL family.

It is found in the cell membrane. The protein resides in the cytoplasm. Its subcellular location is the cytoskeleton. Its function is as follows. Appears to function in the signal transduction from Ras activation to actin cytoskeletal remodeling. The sequence is that of Amyloid beta A4 precursor protein-binding family B member 1-interacting protein (apbb1ip) from Danio rerio (Zebrafish).